We begin with the raw amino-acid sequence, 134 residues long: ATP synthase epsilon chain (134 aa).

Belongs to the ATPase epsilon chain family. In terms of assembly, F-type ATPases have 2 components, CF(1) - the catalytic core - and CF(0) - the membrane proton channel. CF(1) has five subunits: alpha(3), beta(3), gamma(1), delta(1), epsilon(1). CF(0) has three main subunits: a, b and c.

It is found in the cell inner membrane. Functionally, produces ATP from ADP in the presence of a proton gradient across the membrane. The sequence is that of ATP synthase epsilon chain from Sinorhizobium fredii (strain NBRC 101917 / NGR234).